Consider the following 595-residue polypeptide: UvrABC system protein C (595 aa).

The region spanning 17–94 (FEPGCYLMKD…IKQYQPRYNI (78 aa)) is the GIY-YIG domain. One can recognise a UVR domain in the interval 199–234 (KTIIKNLESRMQAASENLEFEQAKEYRDLIQNIHNL).

Belongs to the UvrC family. Interacts with UvrB in an incision complex.

Its subcellular location is the cytoplasm. The UvrABC repair system catalyzes the recognition and processing of DNA lesions. UvrC both incises the 5' and 3' sides of the lesion. The N-terminal half is responsible for the 3' incision and the C-terminal half is responsible for the 5' incision. In Staphylococcus carnosus (strain TM300), this protein is UvrABC system protein C.